Reading from the N-terminus, the 628-residue chain is Siderophore iron transporter 1 (628 aa).

14 consecutive transmembrane segments (helical) span residues 68–88 (IYRV…GLDG), 107–127 (LLST…IFFA), 132–152 (IFGR…GTII), 164–184 (VGGC…EVIA), 194–214 (LLAL…SGNV), 225–245 (GIGM…ICML), 285–305 (IIGM…FTLA), 317–337 (IIVP…LWEI), 354–374 (GIFF…MQGD), 394–414 (ITSL…FILI), 420–440 (KPFI…LVHY), 448–468 (SGII…TYVT), 488–508 (LYLA…GAVW), and 559–579 (KILC…AFML).

The protein belongs to the major facilitator superfamily.

The protein localises to the endosome membrane. Its function is as follows. Involved in the transport of siderophore ferrioxamine B and so has a role in iron homeostasis. This chain is Siderophore iron transporter 1 (SIT1), found in Saccharomyces cerevisiae (strain ATCC 204508 / S288c) (Baker's yeast).